Here is a 413-residue protein sequence, read N- to C-terminus: Chloramphenicol efflux pump MT0201 (413 aa).

12 helical membrane passes run 23-43 (LSVL…PVGA), 55-75 (VVLV…TTVP), 89-109 (LVVS…APNF), 110-130 (AVLA…WAVI), 150-170 (IYIG…AMSL), 176-196 (LAAV…RLAL), 226-246 (VLTM…VVII), 256-276 (NLAW…PLVA), 286-306 (AVIV…ALAF), 312-332 (AATA…ATAV), 353-373 (GLYV…GGLL), and 378-398 (LAMM…GMTV).

This sequence belongs to the major facilitator superfamily.

The protein resides in the cell membrane. Its function is as follows. Active efflux pump that plays an important role in chloramphenicol resistance. The protein is Chloramphenicol efflux pump MT0201 of Mycobacterium tuberculosis (strain CDC 1551 / Oshkosh).